The following is a 241-amino-acid chain: DNA repair protein RecO (241 aa).

This sequence belongs to the RecO family.

Its function is as follows. Involved in DNA repair and RecF pathway recombination. The sequence is that of DNA repair protein RecO from Azobacteroides pseudotrichonymphae genomovar. CFP2.